The primary structure comprises 347 residues: Ribosomal RNA large subunit methyltransferase M (347 aa).

Residues S184, 217-220 (APGG), D236, D256, and D272 contribute to the S-adenosyl-L-methionine site. The Proton acceptor role is filled by K301.

Belongs to the class I-like SAM-binding methyltransferase superfamily. RNA methyltransferase RlmE family. RlmM subfamily. As to quaternary structure, monomer.

It is found in the cytoplasm. The enzyme catalyses cytidine(2498) in 23S rRNA + S-adenosyl-L-methionine = 2'-O-methylcytidine(2498) in 23S rRNA + S-adenosyl-L-homocysteine + H(+). In terms of biological role, catalyzes the 2'-O-methylation at nucleotide C2498 in 23S rRNA. The protein is Ribosomal RNA large subunit methyltransferase M of Xanthomonas euvesicatoria pv. vesicatoria (strain 85-10) (Xanthomonas campestris pv. vesicatoria).